The sequence spans 365 residues: Ferredoxin--NADP reductase, chloroplastic (365 aa).

Residues 1–22 (MAAAVTAAVSFPSTKSTPLSTR) are disordered. A compositionally biased stretch (polar residues) spans 11–22 (FPSTKSTPLSTR). The region spanning 86–208 (KNPYTGRCLL…TGPVGKEMLM (123 aa)) is the FAD-binding FR-type domain. FAD is bound by residues 144-147 (RLYS), 165-167 (CVK), Tyr-171, 182-184 (VCS), and Thr-223. 2 residues coordinate NADP(+): Ser-147 and Lys-167. Residues Thr-223, 255 to 256 (VP), 285 to 286 (SR), Lys-295, 324 to 325 (GL), and Glu-363 contribute to the NADP(+) site.

Belongs to the ferredoxin--NADP reductase type 1 family. The cofactor is FAD.

It is found in the plastid. The protein resides in the chloroplast stroma. It localises to the chloroplast thylakoid membrane. The catalysed reaction is 2 reduced [2Fe-2S]-[ferredoxin] + NADP(+) + H(+) = 2 oxidized [2Fe-2S]-[ferredoxin] + NADPH. It functions in the pathway energy metabolism; photosynthesis. Its function is as follows. May play a key role in regulating the relative amounts of cyclic and non-cyclic electron flow to meet the demands of the plant for ATP and reducing power. In Mesembryanthemum crystallinum (Common ice plant), this protein is Ferredoxin--NADP reductase, chloroplastic (PETH).